We begin with the raw amino-acid sequence, 280 residues long: H-2 class II histocompatibility antigen gamma chain (280 aa).

Topologically, residues 1–30 (MDDQRDLISNHEQLPILGQRARAPESNCNR) are cytoplasmic. Residue S9 is modified to Phosphoserine. The helical; Signal-anchor for type II membrane protein transmembrane segment at 31-56 (GVLYTSVSVLVALLLAGQATTAYFLY) threads the bilayer. Topologically, residues 57 to 280 (QQQGRLDKLT…TKQDMGQMFL (224 aa)) are extracellular. N-linked (GlcNAc...) asparagine glycosylation is found at N114 and N120. The Thyroglobulin type-1 domain occupies 194 to 255 (LTKCQEEVSH…HTKSRGRHNC (62 aa)). Intrachain disulfides connect C197-C216, C227-C234, and C236-C255. Residues 246–268 (HTKSRGRHNCSEPLDMEDPSSGL) are disordered. Residue S266 is glycosylated (O-linked (Xyl...) (chondroitin sulfate) serine).

In terms of assembly, nonamer composed of three alpha/beta/gamma heterotrimers. Interacts with CD44; this complex is essential for the MIF-induced signaling cascade that results in B cell survival. As to quaternary structure, interacts with the mature form of CTSL; the complex survive in neutral pH environment.

Its subcellular location is the late endosome. It localises to the lysosome. The protein resides in the cell membrane. It is found in the endoplasmic reticulum membrane. The protein localises to the golgi apparatus. Its subcellular location is the trans-Golgi network. It localises to the endosome. The protein resides in the secreted. Plays a critical role in MHC class II antigen processing by stabilizing peptide-free class II alpha/beta heterodimers in a complex soon after their synthesis and directing transport of the complex from the endoplasmic reticulum to compartments where peptide loading of class II takes place. Enhance also the stimulation of T-cell responses through interaction with CD44. In terms of biological role, binds to the peptide-binding site of MHC class II alpha/beta heterodimers forming an alpha-beta-CLIP complex, thereby preventing the loading of antigenic peptides to the MHC class II complex until its release by HLA-DM in the endosome. Functionally, stabilizes the conformation of mature CTSL by binding to its active site and serving as a chaperone to help maintain a pool of mature enzyme in endocytic compartments and extracellular space of antigen-presenting cells (APCs). In Rattus norvegicus (Rat), this protein is H-2 class II histocompatibility antigen gamma chain.